A 51-amino-acid polypeptide reads, in one-letter code: FVNQHLCGSHLVEALYLVCGERGFFYTPKAGIVEQCCTSICSLYQLENYCN.

3 disulfides stabilise this stretch: Cys-7–Cys-37, Cys-19–Cys-50, and Cys-36–Cys-41.

The protein belongs to the insulin family. Heterodimer of a B chain and an A chain linked by two disulfide bonds.

The protein resides in the secreted. Its function is as follows. Insulin decreases blood glucose concentration. It increases cell permeability to monosaccharides, amino acids and fatty acids. It accelerates glycolysis, the pentose phosphate cycle, and glycogen synthesis in liver. This is Insulin (INS) from Balaenoptera physalus (Fin whale).